We begin with the raw amino-acid sequence, 107 residues long: Phosphoribosyl-ATP pyrophosphatase (107 aa).

The protein belongs to the PRA-PH family.

Its subcellular location is the cytoplasm. It carries out the reaction 1-(5-phospho-beta-D-ribosyl)-ATP + H2O = 1-(5-phospho-beta-D-ribosyl)-5'-AMP + diphosphate + H(+). The protein operates within amino-acid biosynthesis; L-histidine biosynthesis; L-histidine from 5-phospho-alpha-D-ribose 1-diphosphate: step 2/9. The protein is Phosphoribosyl-ATP pyrophosphatase of Neisseria gonorrhoeae (strain ATCC 700825 / FA 1090).